Reading from the N-terminus, the 647-residue chain is DEAD-box ATP-dependent RNA helicase 18 (647 aa).

The Q motif signature appears at 23 to 51 (FSELSPALSPEVVKALKGGGFRRCTPVQA). Positions 54-232 (IPLLLSHKDV…KAGLRNPVRV (179 aa)) constitute a Helicase ATP-binding domain. ATP is bound at residue 67 to 74 (AATGSGKT). The DEAD box signature appears at 180–183 (DEAD). The region spanning 274-430 (QLVDFLVQNN…DIVPQIRSAA (157 aa)) is the Helicase C-terminal domain. Residues 507–582 (KYKDKAREKQ…RLLKKLKRGV (76 aa)) are a coiled coil. Residues 512 to 545 (AREKQRQKTLKRKAEELALRPEIEKRRKAPEKPE) are compositionally biased toward basic and acidic residues. 2 disordered regions span residues 512 to 565 (AREK…KEDM) and 590 to 647 (KLTG…TRRR). The span at 596 to 610 (ESDDDDSSDGGDSDL) shows a compositional bias: acidic residues. The segment covering 619–633 (KVLKKIKQKGKAKGS) has biased composition (basic residues).

This sequence belongs to the DEAD box helicase family. DDX55/SPB4 subfamily. In terms of assembly, interacts with BRI1. Phosphorylated.

The enzyme catalyses ATP + H2O = ADP + phosphate + H(+). This Oryza sativa subsp. japonica (Rice) protein is DEAD-box ATP-dependent RNA helicase 18.